The primary structure comprises 294 residues: Arsenical-resistance protein ARR1 (294 aa).

Basic residues predominate over residues 1–11; it reads MAKPRGRKGGR. Positions 1-29 are disordered; the sequence is MAKPRGRKGGRKPSLTPPKNKRAAQLRAS. Residues 22 to 45 are basic motif; sequence RAAQLRASQNAFRKRKLERLEELE. A bZIP domain is found at 22-72; that stretch reads RAAQLRASQNAFRKRKLERLEELEKKEAQLTVTNDQIHILKKENELLHFML. Positions 44 to 72 are leucine-zipper; that stretch reads LEKKEAQLTVTNDQIHILKKENELLHFML. Arsenite is bound by residues Cys-132, Cys-137, and Cys-274.

The protein belongs to the bZIP family. YAP subfamily. Homodimer. In terms of processing, phosphorylation by HOG1 promotes nuclear localization in the presence of arsenic.

The protein resides in the cytoplasm. It localises to the nucleus. Transcriptional activity is controlled by regulated degradation by the ubiquitin-proteasome pathway in absence of arsenic. Arsenic-exposure results in stabilization and increased transcriptional activity. Functionally, transcription activator required for resistance to arsenic compounds and for a regulated expression of ACR2, ACR3 and YCF1. The chain is Arsenical-resistance protein ARR1 from Saccharomyces cerevisiae (strain ATCC 204508 / S288c) (Baker's yeast).